We begin with the raw amino-acid sequence, 433 residues long: Enolase (433 aa).

Gln167 serves as a coordination point for (2R)-2-phosphoglycerate. The active-site Proton donor is Glu209. 3 residues coordinate Mg(2+): Asp246, Glu291, and Asp318. Residues Lys343, Arg372, Ser373, and Lys394 each coordinate (2R)-2-phosphoglycerate. Residue Lys343 is the Proton acceptor of the active site.

Belongs to the enolase family. Component of the RNA degradosome, a multiprotein complex involved in RNA processing and mRNA degradation. Mg(2+) is required as a cofactor.

The protein resides in the cytoplasm. Its subcellular location is the secreted. The protein localises to the cell surface. It catalyses the reaction (2R)-2-phosphoglycerate = phosphoenolpyruvate + H2O. It functions in the pathway carbohydrate degradation; glycolysis; pyruvate from D-glyceraldehyde 3-phosphate: step 4/5. In terms of biological role, catalyzes the reversible conversion of 2-phosphoglycerate (2-PG) into phosphoenolpyruvate (PEP). It is essential for the degradation of carbohydrates via glycolysis. The sequence is that of Enolase from Aeromonas salmonicida (strain A449).